The following is a 277-amino-acid chain: Caspase-6 (277 aa).

Residues M1–D5 constitute a propeptide that is removed on maturation. Residues K25–R27 form a tri-arginine exosite region. S62 carries the phosphoserine modification. Residue H104 is part of the active site. A 130's region region spans residues N108–L125. Residue C146 is part of the active site. Residues H163–D176 constitute a propeptide that is removed on maturation. The residue at position 240 (S240) is a Phosphoserine. 2 S-palmitoyl cysteine lipidation sites follow: C247 and C260.

This sequence belongs to the peptidase C14A family. Heterotetramer that consists of two anti-parallel arranged heterodimers, each one formed by a 18 kDa (p18) and a 11 kDa (p11) subunits. Interacts with BIRC6/bruce. Interacts with RIPK3. In terms of assembly, heterotetramer that consists of two anti-parallel arranged heterodimers, each one formed by a 18 kDa (Caspase-6 subunit p18) and a 11 kDa (Caspase-6 subunit p11) subunit. Phosphorylated by NUAK1; phosphorylation inhibits self-activation. Phosphorylation at Ser-240 by AMP-activated protein kinase (PRKAA1 or PRKAA2) inhibits autocleavage, preventing caspase activation, thereby preventing hepatocyte apoptosis. Post-translationally, palmitoylation by ZDHHC17 blocks dimerization and subsequent activation, leading to inhibit the cysteine protease activity. In terms of processing, can be cleaved and activated by different caspases, depending on the context. Cleaved and activated by caspase-8 (CASP8) and subsequently by caspase-3 (CASP3). Can also undergo autoactivation by mediating autocleavage at Asp-162 and Asp-176, while it is not able to cleave its N-terminal disordered prodomain. Cleaved and activated by CASP1, possibly in the context of inflammation.

Its subcellular location is the cytoplasm. It is found in the nucleus. The enzyme catalyses Strict requirement for Asp at position P1 and has a preferred cleavage sequence of Val-Glu-His-Asp-|-.. With respect to regulation, during activation, the N-terminal disordered prodomain is removed by cleavage. Concomitantly, double cleavage gives rise to a large 18-kDa and a small 11-kDa subunit. The two large and two small subunits then assemble to form the active CASP6 complex. Can be cleaved and activated by different caspases, depending on the context. Cleaved and activated by caspase-8 (CASP8) and subsequently by caspase-3 (CASP3). Can also undergo autoactivation by mediating autocleavage at Asp-162 and Asp-176, while it is not able to cleave its N-terminal disordered prodomain. Intramolecular cleavage at Asp-176 is a prerequisite for CASP6 self-activation. Cleaved and activated by CASP1 in neurons, possibly in the context of inflammation. Phosphorylation at Ser-240 inhibits autocleavage, preventing caspase activation. Functionally, cysteine protease that plays essential roles in programmed cell death, axonal degeneration, development and innate immunity. Acts as a non-canonical executioner caspase during apoptosis: localizes in the nucleus and cleaves the nuclear structural protein NUMA1 and lamin A/LMNA thereby inducing nuclear shrinkage and fragmentation. Lamin-A/LMNA cleavage is required for chromatin condensation and nuclear disassembly during apoptotic execution. Acts as a regulator of liver damage by promoting hepatocyte apoptosis: in absence of phosphorylation by AMP-activated protein kinase (AMPK), catalyzes cleavage of BID, leading to cytochrome c release, thereby participating in nonalcoholic steatohepatitis. Cleaves PARK7/DJ-1 in cells undergoing apoptosis. Involved in intrinsic apoptosis by mediating cleavage of RIPK1. Furthermore, cleaves many transcription factors such as NF-kappa-B and cAMP response element-binding protein/CREBBP. Cleaves phospholipid scramblase proteins XKR4 and XKR9. In addition to apoptosis, involved in different forms of programmed cell death. Plays an essential role in defense against viruses by acting as a central mediator of the ZBP1-mediated pyroptosis, apoptosis, and necroptosis (PANoptosis), independently of its cysteine protease activity. PANoptosis is a unique inflammatory programmed cell death, which provides a molecular scaffold that allows the interactions and activation of machinery required for inflammasome/pyroptosis, apoptosis and necroptosis. Mechanistically, interacts with RIPK3 and enhances the interaction between RIPK3 and ZBP1, leading to ZBP1-mediated inflammasome activation and cell death. Plays an essential role in axon degeneration during axon pruning which is the remodeling of axons during neurogenesis but not apoptosis. Regulates B-cell programs both during early development and after antigen stimulation. The protein is Caspase-6 of Rattus norvegicus (Rat).